Consider the following 57-residue polypeptide: Small ribosomal subunit protein bS21 (57 aa).

A disordered region spans residues 35 to 57; the sequence is RERYEKPSLRRKRKQEAARKRNR.

The protein belongs to the bacterial ribosomal protein bS21 family.

The sequence is that of Small ribosomal subunit protein bS21 from Thermosynechococcus vestitus (strain NIES-2133 / IAM M-273 / BP-1).